The primary structure comprises 284 residues: Protein phosphatase 1 regulatory subunit 3B (284 aa).

A PP1-binding motif motif is present at residues 61–64; it reads RVSF. The region spanning 124 to 232 is the CBM21 domain; that stretch reads RNRLQTNHVC…SNKGKNYRIT (109 aa). Phosphoserine is present on serine 260.

In terms of assembly, interacts with glycogen, PPP1CC catalytic subunit of PP1 and PYGL. Associates with glycogen particles. Forms complexes with debranching enzyme, glycogen phosphorylase, glycogen synthase and phosphorylase kinase which is necessary for its regulation of PP1 activity. As to expression, highly expressed in liver. Moderately expressed in kidney, heart, testis, spleen and lung. Weakly expressed in skeletal muscle (at protein level). Expressed predominantly in liver. Expressed moderately in heart. Expressed weakly in lung, kidney, spleen and skeletal muscle.

In terms of biological role, acts as a glycogen-targeting subunit for phosphatase PP1. Facilitates interaction of the PP1 with enzymes of the glycogen metabolism and regulates its activity. Suppresses the rate at which PP1 dephosphorylates (inactivates) glycogen phosphorylase and enhances the rate at which it activates glycogen synthase and therefore limits glycogen breakdown. Its activity is inhibited by PYGL, resulting in inhibition of the glycogen synthase and glycogen phosphorylase phosphatase activities of PP1. Dramatically increases basal and insulin-stimulated glycogen synthesis upon overexpression in hepatocytes. The polypeptide is Protein phosphatase 1 regulatory subunit 3B (Ppp1r3b) (Rattus norvegicus (Rat)).